We begin with the raw amino-acid sequence, 97 residues long: Serine protease inhibitor Kazal-type 14 (97 aa).

The first 21 residues, 1 to 21 (MAKSFPVFSLLSFILIHLVLS), serve as a signal peptide directing secretion. The region spanning 34-97 (GIIKVKCPYE…RIRFYHDGKC (64 aa)) is the Kazal-like domain. 3 disulfides stabilise this stretch: cysteine 40–cysteine 79, cysteine 57–cysteine 76, and cysteine 65–cysteine 97. The N-linked (GlcNAc...) asparagine glycan is linked to asparagine 51.

Its subcellular location is the secreted. May be a serine protease inhibitor. The protein is Serine protease inhibitor Kazal-type 14 (SPINK14) of Homo sapiens (Human).